Consider the following 469-residue polypeptide: Glutamine synthetase (469 aa).

One can recognise a GS beta-grasp domain in the interval 13–97 (HEVKFVDLRF…IRCDILEPGT (85 aa)). In terms of domain architecture, GS catalytic spans 105-469 (PRSIAKRAED…PVEFELYYSV (365 aa)). Mg(2+) contacts are provided by Glu130 and Glu132. Glu208 lines the ATP pocket. Mg(2+)-binding residues include Glu213 and Glu221. L-glutamate-binding positions include 265–266 (NG) and Gly266. His270 serves as a coordination point for Mg(2+). ATP is bound by residues 272-274 (HMS) and Ser274. L-glutamate contacts are provided by Arg322, Glu328, and Arg340. ATP-binding residues include Arg340, Arg345, and Lys353. Position 358 (Glu358) interacts with Mg(2+). Arg360 lines the L-glutamate pocket. Position 398 is an O-AMP-tyrosine (Tyr398).

It belongs to the glutamine synthetase family. As to quaternary structure, oligomer of 12 subunits arranged in the form of two hexameric ring. Requires Mg(2+) as cofactor.

It localises to the cytoplasm. The catalysed reaction is L-glutamate + NH4(+) + ATP = L-glutamine + ADP + phosphate + H(+). With respect to regulation, the activity of this enzyme could be controlled by adenylation under conditions of abundant glutamine. Catalyzes the ATP-dependent biosynthesis of glutamine from glutamate and ammonia. The sequence is that of Glutamine synthetase from Escherichia coli O157:H7.